A 398-amino-acid polypeptide reads, in one-letter code: MTDKNNKRLFKVAPLATAIAASLFTVNASAVEWHGYARSGIGMSDNGDQQCINKQAVGRLGNECETYAELDLQQELFNRDGKTFKVETMLSYKSNQDGDYEALNSEDDEIALRQMNVQAKGVLGFAPEATLWAGKRYYQRHDIHHLDLFYWDVSGPGAGIEGIDAGAGKFSAAWTRGYGNINILDFRYSGIQVGASSLEVGLDLAKPRLTDAQKDAGAADDLSTLFTAELSTPIMDGFNKIVFQYGTEGYASPMRNFGGGQWNGTLDKGGKGFRLIDWGVVKPSANIELSYAAMYGVFEDDDMNDDSSFYSISARPAYKWSDYMRTYLEVGYFAADDDGVDSQLDKITIAQAWSAGPSFWARPEIRVFASYINDGEGTPFEGGEDSVLNFGVQMEAWW.

Positions 1–30 (MTDKNNKRLFKVAPLATAIAASLFTVNASA) are cleaved as a signal peptide.

Belongs to the porin LamB (TC 1.B.3) family. Homotrimer formed of three 18-stranded antiparallel beta-barrels, containing three independent channels.

The protein resides in the cell outer membrane. It carries out the reaction beta-maltose(in) = beta-maltose(out). In terms of biological role, involved in the transport of maltose and maltodextrins. The protein is Maltoporin of Hahella chejuensis (strain KCTC 2396).